The chain runs to 532 residues: Glucose-6-phosphate isomerase (532 aa).

Glu322 (proton donor) is an active-site residue. Active-site residues include His351 and Lys457.

It belongs to the GPI family.

It localises to the cytoplasm. The enzyme catalyses alpha-D-glucose 6-phosphate = beta-D-fructose 6-phosphate. Its pathway is carbohydrate biosynthesis; gluconeogenesis. It participates in carbohydrate degradation; glycolysis; D-glyceraldehyde 3-phosphate and glycerone phosphate from D-glucose: step 2/4. Functionally, catalyzes the reversible isomerization of glucose-6-phosphate to fructose-6-phosphate. The chain is Glucose-6-phosphate isomerase from Synechococcus sp. (strain JA-3-3Ab) (Cyanobacteria bacterium Yellowstone A-Prime).